The primary structure comprises 431 residues: Asparagine--tRNA ligase 1 (431 aa).

This sequence belongs to the class-II aminoacyl-tRNA synthetase family. Homodimer.

The protein resides in the cytoplasm. The catalysed reaction is tRNA(Asn) + L-asparagine + ATP = L-asparaginyl-tRNA(Asn) + AMP + diphosphate + H(+). The chain is Asparagine--tRNA ligase 1 (asnS1) from Lactiplantibacillus plantarum (strain ATCC BAA-793 / NCIMB 8826 / WCFS1) (Lactobacillus plantarum).